The chain runs to 466 residues: Adenylosuccinate lyase (466 aa).

Substrate-binding positions include 21 to 22, 97 to 99, and 130 to 131; these read RY, NHD, and TS. His-180 (proton donor/acceptor) is an active-site residue. Residue Gln-259 coordinates substrate. Ser-307 functions as the Proton donor/acceptor in the catalytic mechanism. Residues Arg-347, Ser-352, and Arg-356 each coordinate substrate.

This sequence belongs to the lyase 1 family. Adenylosuccinate lyase subfamily. As to quaternary structure, homotetramer. Residues from neighboring subunits contribute catalytic and substrate-binding residues to each active site.

The catalysed reaction is N(6)-(1,2-dicarboxyethyl)-AMP = fumarate + AMP. It catalyses the reaction (2S)-2-[5-amino-1-(5-phospho-beta-D-ribosyl)imidazole-4-carboxamido]succinate = 5-amino-1-(5-phospho-beta-D-ribosyl)imidazole-4-carboxamide + fumarate. Its pathway is purine metabolism; AMP biosynthesis via de novo pathway; AMP from IMP: step 2/2. It functions in the pathway purine metabolism; IMP biosynthesis via de novo pathway; 5-amino-1-(5-phospho-D-ribosyl)imidazole-4-carboxamide from 5-amino-1-(5-phospho-D-ribosyl)imidazole-4-carboxylate: step 2/2. This chain is Adenylosuccinate lyase (purB), found in Dictyostelium discoideum (Social amoeba).